A 362-amino-acid chain; its full sequence is Phosphoserine aminotransferase (362 aa).

The L-glutamate site is built by Ser-9 and Arg-42. Residues 76–77 (GR), Trp-102, Thr-153, Asp-174, and Gln-197 each bind pyridoxal 5'-phosphate. N6-(pyridoxal phosphate)lysine is present on Lys-198. 239–240 (NT) serves as a coordination point for pyridoxal 5'-phosphate.

This sequence belongs to the class-V pyridoxal-phosphate-dependent aminotransferase family. SerC subfamily. As to quaternary structure, homodimer. The cofactor is pyridoxal 5'-phosphate.

It is found in the cytoplasm. It catalyses the reaction O-phospho-L-serine + 2-oxoglutarate = 3-phosphooxypyruvate + L-glutamate. It carries out the reaction 4-(phosphooxy)-L-threonine + 2-oxoglutarate = (R)-3-hydroxy-2-oxo-4-phosphooxybutanoate + L-glutamate. It functions in the pathway amino-acid biosynthesis; L-serine biosynthesis; L-serine from 3-phospho-D-glycerate: step 2/3. Its pathway is cofactor biosynthesis; pyridoxine 5'-phosphate biosynthesis; pyridoxine 5'-phosphate from D-erythrose 4-phosphate: step 3/5. Catalyzes the reversible conversion of 3-phosphohydroxypyruvate to phosphoserine and of 3-hydroxy-2-oxo-4-phosphonooxybutanoate to phosphohydroxythreonine. This chain is Phosphoserine aminotransferase, found in Escherichia coli O157:H7.